A 520-amino-acid polypeptide reads, in one-letter code: MLNVPSQAFPAPGSQQRVASQGRSKVPLKQGRSLMDWFRLTKSGKDFTGLKGGLIEVTEEELKKHNKKDDCWICIRGFVYNVSPYMEYHPGGEDELMRAAGADGTDLFNEVHRWVNYESMLKECLVGRMAVKPAVPKDCHEGKRVLNGMLPKSQVTDTLPREGPSSPSYDWFQTESSVTIVIYTKQKNINLDSVIVDLQDDSLRAEAVIKDHSYLIHIGLSHEVQENFSVRVIENVGKIEIVLQKKETVSWKCLGDPLEKHDSFIPKKDTGLYYRQCQLISKEDVTHDTRLFCLMLPPSTHLQVPVGQHVYLKLSVTGAEIVKPYTPVSESLLSDFKEPVLSPNKYIYFLIKIYPAGLFTPELDRLQIGDFVSVSGPEGNFKVSKLQEVEDLFLLAAGTGFTPMVTVLNHALTHMSSLRKVKLMFFNKTEDDIIWRCQLEKLALKDKRFHVEYVLSAPSPEWNGKQGHVSRALLSEFLQRSLENSKVFLCICGPTPFTDEGIRLLHDLNFSDDEIHGFTA.

M1 is subject to N-acetylmethionine. The disordered stretch occupies residues 1 to 27 (MLNVPSQAFPAPGSQQRVASQGRSKVP). A compositionally biased stretch (polar residues) spans 13–23 (GSQQRVASQGR). The 77-residue stretch at 54 to 130 (LIEVTEEELK…LKECLVGRMA (77 aa)) folds into the Cytochrome b5 heme-binding domain. The heme site is built by H89 and H112. The CS domain occupies 164–255 (PSSPSYDWFQ…KETVSWKCLG (92 aa)). Residues 272-384 (LYYRQCQLIS…SGPEGNFKVS (113 aa)) enclose the FAD-binding FR-type domain. Residues 364–379 (DRLQIGDFVSVSGPEG) and 391–423 (DLFLLAAGTGFTPMVTVLNHALTHMSSLRKVKL) each bind FAD.

The protein belongs to the flavoprotein pyridine nucleotide cytochrome reductase family. The cofactor is FAD. As to expression, isoform 2 is expressed in testis, brain, skeletal muscle and in the male germline.

The protein resides in the endoplasmic reticulum. It catalyses the reaction 2 Fe(III)-[cytochrome b5] + NADH = 2 Fe(II)-[cytochrome b5] + NAD(+) + H(+). Its function is as follows. NADH-cytochrome b5 reductase involved in endoplasmic reticulum stress response pathway. Plays a critical role in protecting pancreatic beta-cells against oxidant stress, possibly by protecting the cell from excess buildup of reactive oxygen species (ROS). The sequence is that of Cytochrome b5 reductase 4 (Cyb5r4) from Rattus norvegicus (Rat).